The sequence spans 129 residues: Phosphoribosyl-AMP cyclohydrolase (129 aa).

A Mg(2+)-binding site is contributed by Asp77. Position 78 (Cys78) interacts with Zn(2+). Mg(2+) is bound by residues Asp79 and Asp81. Residues Cys94 and Cys101 each coordinate Zn(2+).

Belongs to the PRA-CH family. As to quaternary structure, homodimer. Mg(2+) is required as a cofactor. Requires Zn(2+) as cofactor.

It localises to the cytoplasm. The catalysed reaction is 1-(5-phospho-beta-D-ribosyl)-5'-AMP + H2O = 1-(5-phospho-beta-D-ribosyl)-5-[(5-phospho-beta-D-ribosylamino)methylideneamino]imidazole-4-carboxamide. Its pathway is amino-acid biosynthesis; L-histidine biosynthesis; L-histidine from 5-phospho-alpha-D-ribose 1-diphosphate: step 3/9. In terms of biological role, catalyzes the hydrolysis of the adenine ring of phosphoribosyl-AMP. This is Phosphoribosyl-AMP cyclohydrolase from Pelotomaculum thermopropionicum (strain DSM 13744 / JCM 10971 / SI).